The sequence spans 131 residues: Global transcriptional regulator Spx 1 (131 aa).

A disulfide bridge connects residues C10 and C13.

The protein belongs to the ArsC family. Spx subfamily. In terms of assembly, interacts with the C-terminal domain of the alpha subunit of the RNAP.

The protein resides in the cytoplasm. Its function is as follows. Global transcriptional regulator that plays a key role in stress response and exerts either positive or negative regulation of genes. Acts by interacting with the C-terminal domain of the alpha subunit of the RNA polymerase (RNAP). This interaction can enhance binding of RNAP to the promoter region of target genes and stimulate their transcription, or block interaction of RNAP with activator. In Bacillus anthracis, this protein is Global transcriptional regulator Spx 1.